The sequence spans 503 residues: Alpha-1,3/1,6-mannosyltransferase ALG2 (503 aa).

2 helical membrane-spanning segments follow: residues 64 to 84 (VYGDFLPTNFLGRFFIVFATI) and 112 to 132 (TCIPLLHIFSSATLMFYCHFP). Asparagine 170, asparagine 303, asparagine 371, and asparagine 400 each carry an N-linked (GlcNAc...) asparagine glycan. A helical membrane pass occupies residues 443–463 (WEIFGISFSNFILHMAFIKIL).

Belongs to the glycosyltransferase group 1 family. Glycosyltransferase 4 subfamily. As to quaternary structure, interacts with ALG1.

Its subcellular location is the endoplasmic reticulum membrane. The catalysed reaction is a beta-D-Man-(1-&gt;4)-beta-D-GlcNAc-(1-&gt;4)-alpha-D-GlcNAc-diphospho-di-trans,poly-cis-dolichol + GDP-alpha-D-mannose = an alpha-D-Man-(1-&gt;3)-beta-D-Man-(1-&gt;4)-beta-D-GlcNAc-(1-&gt;4)-alpha-D-GlcNAc-diphospho-di-trans,poly-cis-dolichol + GDP + H(+). The enzyme catalyses an alpha-D-Man-(1-&gt;3)-beta-D-Man-(1-&gt;4)-beta-D-GlcNAc-(1-&gt;4)-alpha-D-GlcNAc-diphospho-di-trans,poly-cis-dolichol + GDP-alpha-D-mannose = an alpha-D-Man-(1-&gt;3)-[alpha-D-Man-(1-&gt;6)]-beta-D-Man-(1-&gt;4)-beta-D-GlcNAc-(1-&gt;4)-alpha-D-GlcNAc-diphospho-di-trans,poly-cis-dolichol + GDP + H(+). The protein operates within protein modification; protein glycosylation. In terms of biological role, mannosylates Man(2)GlcNAc(2)-dolichol diphosphate and Man(1)GlcNAc(2)-dolichol diphosphate to form Man(3)GlcNAc(2)-dolichol diphosphate. This chain is Alpha-1,3/1,6-mannosyltransferase ALG2 (ALG2), found in Saccharomyces cerevisiae (strain ATCC 204508 / S288c) (Baker's yeast).